We begin with the raw amino-acid sequence, 206 residues long: Sclerostin domain-containing protein 1 (206 aa).

A signal peptide spans 1–23 (MLPPAIHLSLIPLLCILMRNCLA). Residues 42 to 62 (AHPSSNSTLNQARNGGRHFSS) form a disordered region. The span at 44–62 (PSSNSTLNQARNGGRHFSS) shows a compositional bias: polar residues. Asparagine 47 carries an N-linked (GlcNAc...) asparagine glycan. Intrachain disulfides connect cysteine 75/cysteine 133, cysteine 89/cysteine 147, cysteine 100/cysteine 163, and cysteine 104/cysteine 165. The region spanning 75–170 (CRELRSTKYI…TACKCKRYTR (96 aa)) is the CTCK domain. Asparagine 173 carries an N-linked (GlcNAc...) asparagine glycan. Residues 176 to 206 (SHNFESVSPAKPAQHHRERKRASKSSKHSLS) are disordered. The span at 188–206 (AQHHRERKRASKSSKHSLS) shows a compositional bias: basic residues.

It belongs to the sclerostin family. In terms of assembly, interacts with BMP2, BMP4, BMP6 and BMP7 with high affinity. As to expression, highly expressed in kidney at renal collecting ducts level and weakly in brain.

Its subcellular location is the secreted. Functionally, may be involved in the onset of endometrial receptivity for implantation/sensitization for the decidual cell reaction. Enhances Wnt signaling and inhibits TGF-beta signaling. Directly antagonizes activity of BMP2, BMP4, BMP6 and BMP7 in a dose-dependent manner. In Mus musculus (Mouse), this protein is Sclerostin domain-containing protein 1 (Sostdc1).